Reading from the N-terminus, the 262-residue chain is (2Z,6E)-farnesyl diphosphate synthase (262 aa).

The active site involves aspartate 40. Aspartate 40 contributes to the Mg(2+) binding site. Substrate is bound by residues 41 to 44 (GNRR), tryptophan 45, and 86 to 88 (STE). Residue asparagine 89 is the Proton acceptor of the active site. Residues arginine 92, arginine 211, and 217-219 (RLS) contribute to the substrate site. Glutamate 230 provides a ligand contact to Mg(2+).

This sequence belongs to the UPP synthase family. Z-FPP synthase subfamily. Homodimer. Mg(2+) is required as a cofactor.

Its subcellular location is the cytoplasm. The protein resides in the cell membrane. It catalyses the reaction isopentenyl diphosphate + (2E)-geranyl diphosphate = (2Z,6E)-farnesyl diphosphate + diphosphate. Its function is as follows. Catalyzes the condensation of only one isopentenyl pyrophosphate (IPP) unit in the cis configuration to E-geranyl diphosphate (E-GPP) generating the 15 carbon product (2Z,6E)-farnesyl diphosphate (Z-FPP or EZ-FPP). Z-FPP is the precursor of decaprenyl diphosphate, which has a central role in the biosynthesis of the mycobacterial cell wall. The sequence is that of (2Z,6E)-farnesyl diphosphate synthase from Mycobacterium tuberculosis (strain CDC 1551 / Oshkosh).